The primary structure comprises 460 residues: MALSAAIILAAGEGTRMRSNKPKVLHTLAGKTFLNRVMDSVAALDPDTLAVVVHYQAERVAEAARSYNEHVTIVEQDDIPGTGRAVQCAMAQLTQKDDLDGAVLIAASDMPLLDTDTLDQLLAFHEKSGNGATVLTTILDDPTGYGRIIRDSEGNVLRIVEQKDANSSELAVREVNTSVYVFDAKLLAEAIANLKSNNAQGEFYLTDALEAAKANGAVGAFAAPDPLSVEGVNDRVQLAALAKAHNKRVCEHWMREGVTILDPDTTWIEDDVQIARDAVILPGCFLQGHTVIGEAAEVGPYTTLIGATIDAEAHVERSRVQETHIGRAANIGPWTYLRPGNELGEGSKAGAFVEMKKAHIGNGTKVPHLSYVGDADLGEHTNIGGGTITANYDGVHKHHTTIGSNVHVGAGNLFVAPVTVGDGVTTGAGSVVRHDVPSDSMVYSENTQHVVEGWKPEWER.

The interval 1–235 (MALSAAIILA…PLSVEGVNDR (235 aa)) is pyrophosphorylase. UDP-N-acetyl-alpha-D-glucosamine-binding positions include 9-12 (LAAG), Lys-23, Gln-76, and 81-82 (GT). Position 109 (Asp-109) interacts with Mg(2+). Residues Gly-146, Glu-161, Asn-176, and Asn-233 each coordinate UDP-N-acetyl-alpha-D-glucosamine. Mg(2+) is bound at residue Asn-233. The tract at residues 236–256 (VQLAALAKAHNKRVCEHWMRE) is linker. An N-acetyltransferase region spans residues 257–460 (GVTILDPDTT…VEGWKPEWER (204 aa)). Positions 338 and 356 each coordinate UDP-N-acetyl-alpha-D-glucosamine. His-368 serves as the catalytic Proton acceptor. Residues Tyr-371 and Asn-382 each coordinate UDP-N-acetyl-alpha-D-glucosamine. Acetyl-CoA contacts are provided by residues 391-392 (NY) and Ala-428.

In the N-terminal section; belongs to the N-acetylglucosamine-1-phosphate uridyltransferase family. The protein in the C-terminal section; belongs to the transferase hexapeptide repeat family. As to quaternary structure, homotrimer. It depends on Mg(2+) as a cofactor.

The protein resides in the cytoplasm. It carries out the reaction alpha-D-glucosamine 1-phosphate + acetyl-CoA = N-acetyl-alpha-D-glucosamine 1-phosphate + CoA + H(+). The enzyme catalyses N-acetyl-alpha-D-glucosamine 1-phosphate + UTP + H(+) = UDP-N-acetyl-alpha-D-glucosamine + diphosphate. It functions in the pathway nucleotide-sugar biosynthesis; UDP-N-acetyl-alpha-D-glucosamine biosynthesis; N-acetyl-alpha-D-glucosamine 1-phosphate from alpha-D-glucosamine 6-phosphate (route II): step 2/2. It participates in nucleotide-sugar biosynthesis; UDP-N-acetyl-alpha-D-glucosamine biosynthesis; UDP-N-acetyl-alpha-D-glucosamine from N-acetyl-alpha-D-glucosamine 1-phosphate: step 1/1. Its pathway is bacterial outer membrane biogenesis; LPS lipid A biosynthesis. Its function is as follows. Catalyzes the last two sequential reactions in the de novo biosynthetic pathway for UDP-N-acetylglucosamine (UDP-GlcNAc). The C-terminal domain catalyzes the transfer of acetyl group from acetyl coenzyme A to glucosamine-1-phosphate (GlcN-1-P) to produce N-acetylglucosamine-1-phosphate (GlcNAc-1-P), which is converted into UDP-GlcNAc by the transfer of uridine 5-monophosphate (from uridine 5-triphosphate), a reaction catalyzed by the N-terminal domain. This is Bifunctional protein GlmU from Bifidobacterium adolescentis (strain ATCC 15703 / DSM 20083 / NCTC 11814 / E194a).